The primary structure comprises 1465 residues: MSDLFAKLMDQIEMPLDMRRSSAFSSADIIEVKVHSVSRLWEFHFAFAAVLPIATYRELHDRLIRTFEAADIKVTFDIQAAQVDYSDDLLQAYYQEAFEHAPCNSASFKSSFSKLKVTYEDDKLIIAAPGFVNNDHFRNNHLPNLVKQFEAFGFGTLTIDMVSDQEMTEHLTKNFVSSRQALVEKAVQDNLEAQKSLEAMMPPVEEATPAPKFDYKERAAKRQAGFEKATITPMIEIETEENRIVFEGMVFDVERKTTRTGRHIINFKMTDYTSSFALQKWAKDDEELRKFDMIAKGAWLRVQGNIETNPFTKSLTMNVQQVKEIVHHERKDLMPEGQKRVEFHAHTNMSTMDALPTVESLIDMAAKWGHKAVAITDHANVQSFPHGYHRARKAGIKAIFGLEANIVEDKVPISYDPVDMDLHEATYVVFDVETTGLSAMNNDLIQIAASKMFKGNIVEQFDEFIDPGHPLSAFTTELTGITDKHLQGAKPLVTVLKAFQDFCKDSILVAHNASFDVGFMNANYERHDLPKITQPVIDTLEFARNLYPEYKRHGLGPLTKRFQVSLDHHHMANYDAEATGRLLFIFLKDAREKHGIKNLLQLNTDLVAEDSYKKARIKHATIYVQNQVGLKNMFKLVSLSNIKYFEGIPRIPRTVLDAHREGLLLGTACSDGEVFDAVLTKGIDAAVDLAKYYDFIEIMPPAIYQPLVVRELIKDQAGIEQVIRDLIEVGKRANKPVLATGNVHYLEPEEEIYREIIVRSLGQGAMINRTIGRGEGAQPAPLPKAHFRTTNEMLDEFAFLGKDLAYQVVVENTQDFADRIEEVEVVKGDLYTPYIDKAEETVAELTYQKAFEIYGNPLPDIIDLRIEKELTSILGNGFAVIYLASQMLVNRSNERGYLVGSRGSVGSSFVATMIGITEVNPMPPHYVCPSCQHSEFITDGSVGSGYDLPNKPCPKCGTPYQKDGQDIPFETFLGFDGDKVPDIDLNFSGDDQPSAHLDVRDIFGDEYAFRAGTVGTVAEKTAYGFVKGYERDYGKFYRDAEVERLAAGAAGVKRTTGQHPGGIVVIPNYMDVYDFTPVQYPADDVTASWQTTHFNFHDIDENVLKLDILGHDDPTMIRKLQDLSGIDPITIPADDPGVMALFSGTEVLGVTPEQIGTPTGMLGIPEFGTNFVRGMVNETHPTTFAELLQLSGLSHGTDVWLGNAQDLIKEGIATLKTVIGCRDDIMVYLMHAGLEPKMAFTIMERVRKGLWLKISEEERNGYIDAMRENNVPDWYIESCGKIKYMFPKAHAAAYVLMALRVAYFKVHHPIMYYCAYFSIRAKAFELKTMSGGLDAVKARMEDITIKRKNNEATNVENDLFTTLEIVNEMLERGFKFGKLDLYKSDAIEFQIKGDTLIPPFIALEGLGENVAKQIVKARQEGEFLSKMELRKRGGASSTLVEKMDEMSILGNMPEDNQLSLFDDFF.

In terms of domain architecture, Exonuclease spans 427 to 583; that stretch reads YVVFDVETTG…YDAEATGRLL (157 aa).

This sequence belongs to the DNA polymerase type-C family. PolC subfamily.

It is found in the cytoplasm. The catalysed reaction is DNA(n) + a 2'-deoxyribonucleoside 5'-triphosphate = DNA(n+1) + diphosphate. Required for replicative DNA synthesis. This DNA polymerase also exhibits 3' to 5' exonuclease activity. In Streptococcus pyogenes serotype M6 (strain ATCC BAA-946 / MGAS10394), this protein is DNA polymerase III PolC-type.